Here is a 333-residue protein sequence, read N- to C-terminus: N-acetyl-gamma-glutamyl-phosphate reductase (333 aa).

C145 is an active-site residue.

It belongs to the NAGSA dehydrogenase family. Type 1 subfamily.

Its subcellular location is the cytoplasm. The catalysed reaction is N-acetyl-L-glutamate 5-semialdehyde + phosphate + NADP(+) = N-acetyl-L-glutamyl 5-phosphate + NADPH + H(+). The protein operates within amino-acid biosynthesis; L-arginine biosynthesis; N(2)-acetyl-L-ornithine from L-glutamate: step 3/4. Catalyzes the NADPH-dependent reduction of N-acetyl-5-glutamyl phosphate to yield N-acetyl-L-glutamate 5-semialdehyde. This Salinispora tropica (strain ATCC BAA-916 / DSM 44818 / JCM 13857 / NBRC 105044 / CNB-440) protein is N-acetyl-gamma-glutamyl-phosphate reductase.